We begin with the raw amino-acid sequence, 551 residues long: Bestrophin-1 (551 aa).

At 1 to 31 (MTITYTNKVANARLGSFSSLLLCWRGSIYKL) the chain is on the cytoplasmic side. Position 10 (alanine 10) interacts with Ca(2+). A helical transmembrane segment spans residues 32–51 (LYGEFLVFIFLYYSIRGLYR). Residues 52–60 (MVLSSDQQL) are Extracellular-facing. The chain crosses the membrane as a helical span at residues 61–82 (LFEKLALYCDSYIQLIPISFVL). The Cytoplasmic portion of the chain corresponds to 83–237 (GFYVTLVVSR…DWISIPLVYT (155 aa)). Residues 238–255 (QVVTVAVYSFFLACLIGR) traverse the membrane as a helical segment. At 256–274 (QFLNPNKDYPGHEMDLVVP) the chain is on the extracellular side. Residues 275–288 (VFTILQFLFYMGWL) traverse the membrane as a helical segment. Residues 289 to 551 (KVAEQLINPF…EAGTKPVLYE (263 aa)) lie on the Cytoplasmic side of the membrane. Ca(2+) contacts are provided by glutamine 293, asparagine 296, aspartate 301, and aspartate 304. Residues 346-379 (PYTAASARSRRHSFMGSTFNISLKKEDLELWSKE) form an auto-inhibitory segment region. Positions 459–489 (SHCGPQAPSSHPTEQSAPSSSDTGDGPSTDY) are disordered. A compositionally biased stretch (polar residues) spans 465–475 (APSSHPTEQSA). The segment covering 476–488 (PSSSDTGDGPSTD) has biased composition (low complexity).

Belongs to the anion channel-forming bestrophin (TC 1.A.46) family. Calcium-sensitive chloride channel subfamily. In terms of assembly, interacts with YWHAG; this interaction promotes the ligand-gated L-glutamate channel activity leading to the positive regulation of NMDA glutamate receptor activity through the L-glutamate secretion.

The protein resides in the cell membrane. It is found in the basolateral cell membrane. It catalyses the reaction 4-aminobutanoate(in) = 4-aminobutanoate(out). The enzyme catalyses L-glutamate(out) = L-glutamate(in). The catalysed reaction is chloride(in) = chloride(out). It carries out the reaction hydrogencarbonate(in) = hydrogencarbonate(out). It catalyses the reaction D-serine(in) = D-serine(out). Its activity is regulated as follows. Inactivated by sulfhydryl-reactive agents. Ligand-gated anion channel that allows the movement of anions across cell membranes when activated by calcium (Ca2+). Allows the movement of chloride and hydrogencarbonate. Found in a partially open conformation leading to significantly smaller chloride movement. Upon F2R/PAR-1 activation, the sequestered calcium is released into the cytosol of astrocytes, leading to the (Ca2+)-dependent release of L-glutamate into the synaptic cleft that targets the neuronal postsynaptic GRIN2A/NMDAR receptor resulting in the synaptic plasticity regulation. Upon activation of the norepinephrine-alpha-1 adrenergic receptor signaling pathway, transports as well D-serine than L-glutamate in a (Ca2+)-dependent manner, leading to activation of adjacent NMDAR receptors and therefore regulates the heterosynaptic long-term depression and metaplasticity during initial memory acquisition. Releases the 4-aminobutanoate neurotransmitter in a (Ca2+)-dependent manner, and participates in its tonic release from cerebellar glial cells. This Mus musculus (Mouse) protein is Bestrophin-1.